A 307-amino-acid polypeptide reads, in one-letter code: DNA damage tolerance protein rad31 (307 aa).

Functionally, could be involved in a ubiquitin-related process important for DNA damage tolerance. Acts in a process which is defective in the checkpoint rad mutants and which involves hus5. In Schizosaccharomyces pombe (strain 972 / ATCC 24843) (Fission yeast), this protein is DNA damage tolerance protein rad31 (rad31).